A 186-amino-acid polypeptide reads, in one-letter code: Putative transcriptional regulator encoded by LINC00473 (186 aa).

The interval 1–62 (MELSAAAGRR…RDCTPTCTNA (62 aa)) is disordered. A compositionally biased stretch (basic and acidic residues) spans 18 to 40 (FTGRHRTERSQERGSTPRKERSM).

Its function is as follows. May play a role in cAMP-mediated gene transcription. This is Putative transcriptional regulator encoded by LINC00473 (LINC00473) from Homo sapiens (Human).